The sequence spans 510 residues: Putative glycerol-3-phosphate transporter 3 (510 aa).

A run of 12 helical transmembrane segments spans residues 31 to 51 (LSFKQYQAMVFVLTFIAYIAF), 91 to 111 (ALLGQIDLAFLSVYAVGMFVA), 123 to 143 (FLTIGMVGTGVCTALFGVAFW), 158 to 178 (LAGWFQSIGWPCVVAVLGNWF), 185 to 205 (VIMGVWSAHTSLGNIIGTLIA), 217 to 237 (FVGPALLITFLGIVVYLFLPV), 279 to 299 (VGFLAAWKIPGVAPFAFCLFF), 331 to 351 (GNLSTLFDVGGVVGGILAGYF), 355 to 375 (LDGRAITAGGFIYLTIPALFL), 378 to 398 (IYGHVSMTINIILMFVAGLFV), 436 to 456 (TGSVGAAIGPVLTGYIAAISW), and 459 to 479 (VFYMLMTAALISGLLLTTLII).

Belongs to the major facilitator superfamily. Organophosphate:Pi antiporter (OPA) (TC 2.A.1.4) family.

The protein localises to the membrane. This is Putative glycerol-3-phosphate transporter 3 from Arabidopsis thaliana (Mouse-ear cress).